We begin with the raw amino-acid sequence, 136 residues long: Small ribosomal subunit protein eS6 (136 aa).

The protein belongs to the eukaryotic ribosomal protein eS6 family.

The protein is Small ribosomal subunit protein eS6 of Methanosarcina acetivorans (strain ATCC 35395 / DSM 2834 / JCM 12185 / C2A).